The primary structure comprises 234 residues: Opacity protein opA65 (234 aa).

Ala1 is a signal peptide. The tract at residues 154–179 is disordered; sequence TVTPKPKNGTQGGPVKSTSPIPAYHE.

The protein belongs to the opacity porin family.

The protein resides in the cell outer membrane. Implicated in a number of adherence functions. OPA proteins are implicated in pathogenesis and are subject to phase variation. The polypeptide is Opacity protein opA65 (Neisseria gonorrhoeae).